A 407-amino-acid polypeptide reads, in one-letter code: MKPTVWHHLRLCPHGHPDETLDDAAIAVDETGTIVWLGAFSALPHGYAHWQREDLHGAWVTPGLVDCHTHLVYGGTRADEFAQRLAGVSYEEIARQGGGIVSTVRATRAADETTLFVQAAARLQPLLAEGVSAIEIKSGYGLDLASERKMLRVARQLGERFPVSVYTTFLGAHALPPEYAGRADEYIDEVCERMLPTLADEGLVDAVDVFCERIGFSLAQTERVFEAATRRGLPVKLHAEQLSNAGGTALAARYRALSADHLEFLDEAGIEAMKAAGTVAVLLPGAYYFIRETQLPPIELLRKHGVPIALATDHNPGTSPLESLLLTLNMGCTLFRMTVPEVLQGVTRHAAAALGRADRHGALEIGRQADFAVWSVGSLAELAYWIGRPLCEQVVRGGATVFRRMNG.

Residues His-68 and His-70 each coordinate Fe(3+). Residues His-68 and His-70 each contribute to the Zn(2+) site. 4-imidazolone-5-propanoate-binding residues include Arg-77, Tyr-140, and His-173. Residue Tyr-140 participates in N-formimidoyl-L-glutamate binding. His-238 serves as a coordination point for Fe(3+). His-238 serves as a coordination point for Zn(2+). Gln-241 is a binding site for 4-imidazolone-5-propanoate. Asp-313 provides a ligand contact to Fe(3+). Asp-313 is a Zn(2+) binding site. Residues Asn-315 and Gly-317 each contribute to the N-formimidoyl-L-glutamate site. Thr-318 contributes to the 4-imidazolone-5-propanoate binding site.

Belongs to the metallo-dependent hydrolases superfamily. HutI family. It depends on Zn(2+) as a cofactor. Requires Fe(3+) as cofactor.

It localises to the cytoplasm. It catalyses the reaction 4-imidazolone-5-propanoate + H2O = N-formimidoyl-L-glutamate. It functions in the pathway amino-acid degradation; L-histidine degradation into L-glutamate; N-formimidoyl-L-glutamate from L-histidine: step 3/3. Functionally, catalyzes the hydrolytic cleavage of the carbon-nitrogen bond in imidazolone-5-propanoate to yield N-formimidoyl-L-glutamate. It is the third step in the universal histidine degradation pathway. In Burkholderia ambifaria (strain ATCC BAA-244 / DSM 16087 / CCUG 44356 / LMG 19182 / AMMD) (Burkholderia cepacia (strain AMMD)), this protein is Imidazolonepropionase.